Consider the following 168-residue polypeptide: Photosystem I assembly protein Ycf3 (168 aa).

3 TPR repeats span residues 35 to 68 (AFTYYRDGMSAQSEGNYAEALQNYYEAMRLEIDP), 72 to 105 (SYILYNIGLIHTSNGEHTKALEYYFRALERNPFL), and 120 to 153 (GEQAIRQGDSEVAESWFNQAAEYWKQAIALTPGN).

It belongs to the Ycf3 family.

It localises to the plastid. The protein resides in the chloroplast thylakoid membrane. Essential for the assembly of the photosystem I (PSI) complex. May act as a chaperone-like factor to guide the assembly of the PSI subunits. The protein is Photosystem I assembly protein Ycf3 of Glycine max (Soybean).